Consider the following 421-residue polypeptide: Testin (421 aa).

In terms of domain architecture, PET spans Met92 to Asp199. Residues Glu133 to Cys164 form a disordered region. Residues Pro155–Cys164 are compositionally biased toward basic and acidic residues. LIM zinc-binding domains are found at residues Tyr234–Glu297, Pro299–Val359, and Gln362–Ser421.

The protein belongs to the prickle / espinas / testin family. As to quaternary structure, interacts via LIM domain 1 with ZYX. Interacts (via LIM domain 3) with ENAH and VASP. Interacts with ALKBH4, talin, actin, alpha-actinin, GRIP1 and PXN. Interacts (via LIM domain 2) with ACTL7A (via N-terminus). Heterodimer with ACTL7A; the heterodimer interacts with ENAH to form a heterotrimer.

It is found in the cytoplasm. The protein localises to the cell junction. The protein resides in the focal adhesion. Functionally, scaffold protein that may play a role in cell adhesion, cell spreading and in the reorganization of the actin cytoskeleton. Plays a role in the regulation of cell proliferation. May act as a tumor suppressor. The protein is Testin (TES) of Papio anubis (Olive baboon).